Here is a 623-residue protein sequence, read N- to C-terminus: DNA mismatch repair protein MutL (623 aa).

Residues A353–S368 are compositionally biased toward polar residues. The interval A353–H389 is disordered.

This sequence belongs to the DNA mismatch repair MutL/HexB family.

Its function is as follows. This protein is involved in the repair of mismatches in DNA. It is required for dam-dependent methyl-directed DNA mismatch repair. May act as a 'molecular matchmaker', a protein that promotes the formation of a stable complex between two or more DNA-binding proteins in an ATP-dependent manner without itself being part of a final effector complex. This is DNA mismatch repair protein MutL from Brucella melitensis biotype 2 (strain ATCC 23457).